Here is a 487-residue protein sequence, read N- to C-terminus: Kynureninase 1 (487 aa).

Pyridoxal 5'-phosphate is bound by residues L147, T148, F175 to D178, S232, D261, H264, and Y286. Position 287 is an N6-(pyridoxal phosphate)lysine (K287). 2 residues coordinate pyridoxal 5'-phosphate: W327 and N355.

This sequence belongs to the kynureninase family. Homodimer. Pyridoxal 5'-phosphate is required as a cofactor.

The protein localises to the cytoplasm. The catalysed reaction is L-kynurenine + H2O = anthranilate + L-alanine + H(+). The enzyme catalyses 3-hydroxy-L-kynurenine + H2O = 3-hydroxyanthranilate + L-alanine + H(+). It participates in amino-acid degradation; L-kynurenine degradation; L-alanine and anthranilate from L-kynurenine: step 1/1. The protein operates within cofactor biosynthesis; NAD(+) biosynthesis; quinolinate from L-kynurenine: step 2/3. Catalyzes the cleavage of L-kynurenine (L-Kyn) and L-3-hydroxykynurenine (L-3OHKyn) into anthranilic acid (AA) and 3-hydroxyanthranilic acid (3-OHAA), respectively. The chain is Kynureninase 1 (bna5-1) from Aspergillus oryzae (strain ATCC 42149 / RIB 40) (Yellow koji mold).